The following is an 883-amino-acid chain: NF-X1-type zinc finger protein NFXL2 (883 aa).

Over residues 1–10 (MTNMAGTATT) the composition is skewed to polar residues. Positions 1 to 44 (MTNMAGTATTEFRWKSPPQPPSQEQPISDSDSDSGSDSENHQHR) are disordered. The segment at 87 to 152 (CLICLERIKR…EAVWNCPKCR (66 aa)) adopts an RING-type; degenerate zinc-finger fold. NF-X1-type zinc fingers lie at residues 198–216 (CGHC…SCPK), 250–269 (CNIH…PCRE), 303–322 (CGKH…LCPY), 357–377 (CGYH…TCRI), 410–429 (CARH…PCSE), 437–456 (CRNH…PCPI), 494–515 (CRHG…PCRL), 523–568 (CGHK…RCPE), 605–636 (CGNH…KCDL), 646–664 (CQHP…PCKT), and 709–738 (CTHL…RCKC). The disordered stretch occupies residues 798–824 (EIEEKEEPSGKNASKRRKRRGRGQDIQ). A helical transmembrane segment spans residues 841 to 863 (MVVMLVAMLAAVSYYGYKGLLWL).

This sequence belongs to the NFX1 family. As to quaternary structure, interacts with ADO1/ZTL. In terms of tissue distribution, constitutively expressed in mesophyll and guard cells.

It localises to the nucleus. The protein resides in the membrane. Its pathway is protein modification; protein ubiquitination. Probable transcriptional regulator. May mediate E2- or E3-dependent ubiquitination. Required to gate light sensitivity during the night. Regulates the speed of the clock by acting in the feedback loop between CCA1, LHY and APRR1/TOC1. Promotes the expression of CCA1 at night but not by days. This activational effect is enhanced by interaction with ADO1/ZTL. Association with ADO1/ZTL is not leading to the degradation of NFXL2. Confers sensitivity to osmotic stress such as high salinity. Prevents H(2)O(2) production and abscisic acid accumulation. Part of a regulatory network that integrates the biosynthesis and action of abscisic acid, reactive oxygen species and cuticle components. The chain is NF-X1-type zinc finger protein NFXL2 (NFXL2) from Arabidopsis thaliana (Mouse-ear cress).